Reading from the N-terminus, the 1849-residue chain is Mitogen-activated protein kinase kinase kinase mkh1 (1849 aa).

A Protein kinase domain is found at 1556 to 1825 (WFKGQLIGKG…TKLLAEHPFC (270 aa)). Residues 1562–1570 (IGKGTYGRV) and Lys-1585 contribute to the ATP site. The Proton acceptor role is filled by Asp-1686.

It belongs to the protein kinase superfamily. STE Ser/Thr protein kinase family. MAP kinase kinase kinase subfamily.

It catalyses the reaction L-seryl-[protein] + ATP = O-phospho-L-seryl-[protein] + ADP + H(+). It carries out the reaction L-threonyl-[protein] + ATP = O-phospho-L-threonyl-[protein] + ADP + H(+). Functionally, mitogen-activated protein kinase kinase kinase, part of the mkh1-mkk1-spm1 MAPK cascade that regulates vegetative growth, conidial formation, colony surface hydrophobicity, osmotic stress, cell wall integrity maintenance, carbon and nitrogen source utilization, chitin distribution, septa formation, and pathogenicity. The sequence is that of Mitogen-activated protein kinase kinase kinase mkh1 from Cytospora mali (Apple Valsa canker fungus).